Consider the following 231-residue polypeptide: MEGCVSNLMVCNLAYNGKLDELKESILADKSLATRTDQDSRTALHWACSAGHTEIVEFLLQLGVPVNEKDDAGWSPLHIAASAGRDEIVKALLIKGAQVNAVNQNGCTALHYAASKNRHEIAVMLLEGGANPDAKNHYDATAMHRAAAKGNLKMVHILLFYKASTNIQDTEGNTPLHLACDEERVEEAKLLVTQGASIYIENKEEKTPLQVAKGGLGLILKRIAESEEASM.

7 ANK repeats span residues glycine 3–threonine 36, aspartate 37–lysine 69, aspartate 70–valine 102, asparagine 103–lysine 135, asparagine 136–glutamine 168, aspartate 169–glutamate 201, and asparagine 202–serine 226.

Part of transient complex containing PSMD10, PSMC4, PSMC5 and PAAF1 formed during the assembly of the 26S proteasome. Stays associated throughout the assembly of the PA700/19S RC and is released upon association with the 20S core. Interacts with PSMC4. Interacts with RB1. Interacts with CDK4. Interacts with MDM2. Interacts with RELA. Associates with a CDK4:CCND2 serine/threonine kinase complex. Interacts with ARHGDIA and increases the interaction between ARHGDIA and RHOA, hence promotes ARHGDIA inactivation of RHOA and ROCK.

The protein localises to the cytoplasm. It localises to the nucleus. Acts as a chaperone during the assembly of the 26S proteasome, specifically of the PA700/19S regulatory complex (RC). In the initial step of the base subcomplex assembly is part of an intermediate PSMD10:PSMC4:PSMC5:PAAF1 module which probably assembles with a PSMD5:PSMC2:PSMC1:PSMD2 module. Independently of the proteasome, regulates EGF-induced AKT activation through inhibition of the RHOA/ROCK/PTEN pathway, leading to prolonged AKT activation. Plays an important role in RAS-induced tumorigenesis. In terms of biological role, acts as an oncoprotein by being involved in negative regulation of tumor suppressors RB1 and p53/TP53. Overexpression is leading to phosphorylation of RB1 and proteasomal degradation of RB1. Regulates CDK4-mediated phosphorylation of RB1 by competing with CDKN2A for binding with CDK4. Facilitates binding of MDM2 to p53/TP53 and the mono- and polyubiquitination of p53/TP53 by MDM2 suggesting a function in targeting the TP53:MDM2 complex to the 26S proteasome. Involved in p53-independent apoptosis. Involved in regulation of NF-kappa-B by retaining it in the cytoplasm. Binds to the NF-kappa-B component RELA and accelerates its XPO1/CRM1-mediated nuclear export. This chain is 26S proteasome non-ATPase regulatory subunit 10 (Psmd10), found in Rattus norvegicus (Rat).